A 294-amino-acid chain; its full sequence is Coiled-coil domain-containing protein 69 (294 aa).

The segment at M1–D43 is disordered. Residue G2 is the site of N-myristoyl glycine attachment. Basic and acidic residues predominate over residues R20–P29. Residues A47–V270 are a coiled coil. 2 positions are modified to phosphoserine: S152 and S239.

Belongs to the CCDC69 family.

It localises to the cytoplasm. It is found in the cytoskeleton. The protein localises to the spindle. Its subcellular location is the midbody. May act as a scaffold to regulate the recruitment and assembly of spindle midzone components. Required for the localization of AURKB and PLK1 to the spindle midzone. This chain is Coiled-coil domain-containing protein 69 (CCDC69), found in Bos taurus (Bovine).